A 401-amino-acid polypeptide reads, in one-letter code: Nicotinate phosphoribosyltransferase (401 aa).

His221 carries the phosphohistidine; by autocatalysis modification.

The protein belongs to the NAPRTase family. Post-translationally, transiently phosphorylated on a His residue during the reaction cycle. Phosphorylation strongly increases the affinity for substrates and increases the rate of nicotinate D-ribonucleotide production. Dephosphorylation regenerates the low-affinity form of the enzyme, leading to product release.

It carries out the reaction nicotinate + 5-phospho-alpha-D-ribose 1-diphosphate + ATP + H2O = nicotinate beta-D-ribonucleotide + ADP + phosphate + diphosphate. It participates in cofactor biosynthesis; NAD(+) biosynthesis; nicotinate D-ribonucleotide from nicotinate: step 1/1. Functionally, catalyzes the synthesis of beta-nicotinate D-ribonucleotide from nicotinate and 5-phospho-D-ribose 1-phosphate at the expense of ATP. In Yersinia pseudotuberculosis serotype O:1b (strain IP 31758), this protein is Nicotinate phosphoribosyltransferase.